Consider the following 300-residue polypeptide: Ankyrin repeat domain-containing protein 54 (300 aa).

Residues 1–27 (MAAAAGDADDEPRSGHSSSEGECAVAP) form a disordered region. N-acetylalanine is present on A2. A phosphoserine mark is found at S58 and S63. Positions 99 to 117 (RRLGPTGKEVHALKRLRDS) match the Nuclear localization signal (NLS) motif. 4 ANK repeats span residues 109 to 138 (HALKRLRDSANANDVETVQQLLEDGADPCA), 142 to 171 (KGRTALHFASCNGNDQIVQLLLDHGADPNQ), 175 to 204 (LGNTPLHLAACTNHVPVITTLLRGGARVDA), and 208 to 244 (AGRTPLHLAKSKLNILQEGHAQCLEAVRLEVKQIIHM). An LYN-binding region spans residues 141–241 (DKGRTALHFA…EAVRLEVKQI (101 aa)). The Nuclear export signal (NES) signature appears at 283–293 (LLASFTSLSLQ).

Interacts (via ankyrin repeat region) with LYN (via SH3-domain) in an activation-independent status of LYN. Forms a multiprotein complex with LYN and HCLS1. Interacts with TSN2, VAV1, DBNL and LASP1.

The protein localises to the nucleus. It localises to the cytoplasm. The protein resides in the midbody. In terms of biological role, plays an important role in regulating intracellular signaling events associated with erythroid terminal differentiation. The polypeptide is Ankyrin repeat domain-containing protein 54 (ANKRD54) (Homo sapiens (Human)).